The following is a 187-amino-acid chain: Adenylate kinase (187 aa).

An ATP-binding site is contributed by 10-15 (GSGKGT). Residues 30–59 (STGDLLRSEVVAGTPLGLQAKQVMAQGDLV) are NMP. Residues Thr31, Arg36, 57-59 (DLV), 85-88 (GYPR), and Gln92 each bind AMP. Residues 126–136 (GRAQAEGREDD) are LID. Arg127 lines the ATP pocket. AMP-binding residues include Arg133 and Arg144. An ATP-binding site is contributed by Gly172.

It belongs to the adenylate kinase family. Monomer.

It localises to the cytoplasm. The enzyme catalyses AMP + ATP = 2 ADP. It participates in purine metabolism; AMP biosynthesis via salvage pathway; AMP from ADP: step 1/1. Functionally, catalyzes the reversible transfer of the terminal phosphate group between ATP and AMP. Plays an important role in cellular energy homeostasis and in adenine nucleotide metabolism. The polypeptide is Adenylate kinase (Xylella fastidiosa (strain M23)).